The following is a 428-amino-acid chain: UDP-N-acetylglucosamine 1-carboxyvinyltransferase 2 (428 aa).

22–23 (KN) provides a ligand contact to phosphoenolpyruvate. Arg92 serves as a coordination point for UDP-N-acetyl-alpha-D-glucosamine. Cys116 acts as the Proton donor in catalysis. A 2-(S-cysteinyl)pyruvic acid O-phosphothioketal modification is found at Cys116. UDP-N-acetyl-alpha-D-glucosamine is bound by residues 121–125 (RPIDQ), Asp304, and Ile326.

This sequence belongs to the EPSP synthase family. MurA subfamily.

It is found in the cytoplasm. It catalyses the reaction phosphoenolpyruvate + UDP-N-acetyl-alpha-D-glucosamine = UDP-N-acetyl-3-O-(1-carboxyvinyl)-alpha-D-glucosamine + phosphate. It functions in the pathway cell wall biogenesis; peptidoglycan biosynthesis. In terms of biological role, cell wall formation. Adds enolpyruvyl to UDP-N-acetylglucosamine. This is UDP-N-acetylglucosamine 1-carboxyvinyltransferase 2 from Geobacillus kaustophilus (strain HTA426).